An 824-amino-acid polypeptide reads, in one-letter code: Serine/threonine-protein kinase SCH9 (824 aa).

Positions 1 to 23 are enriched in polar residues; the sequence is MMNFFTSKSSNQDTGFSSQHQHP. Disordered stretches follow at residues 1–37, 125–152, 221–272, and 285–327; these read MMNF…STAG, NAGN…SSTT, ESLG…SQLP, and THRS…SHPI. A compositionally biased stretch (low complexity) spans 24–37; it reads NGQNNGNNNSSTAG. The C2 domain occupies 166-378; sequence QREAAAAAYG…LAHASQHQWH (213 aa). Residues 226-248 show a composition bias toward low complexity; the sequence is INNNNNNNNNNQHNQNQHINNNN. 2 stretches are compositionally biased toward polar residues: residues 249-272 and 286-302; these read ENTN…SQLP and HRSS…SSVT. Residues 307 to 321 are compositionally biased toward low complexity; that stretch reads RSSNSSSGSSNGPKN. The region spanning 412–671 is the Protein kinase domain; it reads FEVLRLLGKG…GRELRAHPFF (260 aa). Residues 418–426 and Lys-441 each bind ATP; that span reads LGKGTFGQV. Asp-538 functions as the Proton acceptor in the catalytic mechanism. Residue Thr-570 is modified to Phosphothreonine; by PKH1 or PKH2. In terms of domain architecture, AGC-kinase C-terminal spans 672–748; sequence ADIDWEALKQ…VDESAIDEHV (77 aa). Ser-711 is modified (phosphoserine; by TORC1). Thr-723 is modified (phosphothreonine; by TORC1). At Ser-726 the chain carries Phosphoserine; by TORC1. Thr-737 carries the post-translational modification Phosphothreonine; by TORC1. Phosphoserine; by TORC1 occurs at positions 758 and 765.

It belongs to the protein kinase superfamily. AGC Ser/Thr protein kinase family. cAMP subfamily. Post-translationally, phosphorylated by TORC1 in nutrient-replete conditions and during mechanical stress.

The enzyme catalyses L-seryl-[protein] + ATP = O-phospho-L-seryl-[protein] + ADP + H(+). The catalysed reaction is L-threonyl-[protein] + ATP = O-phospho-L-threonyl-[protein] + ADP + H(+). Activated by cAMP. In terms of biological role, protein kinase that is part of growth control pathway which is at least partially redundant with the cAMP pathway. Regulates both BCY1 phosphorylation and MPK1 activity. Regulates ribosome biogenesis, translation initiation, and entry into stationary phase in a TORC1-dependent manner. The protein is Serine/threonine-protein kinase SCH9 (SCH9) of Saccharomyces cerevisiae (strain ATCC 204508 / S288c) (Baker's yeast).